Reading from the N-terminus, the 535-residue chain is Putative beta-glucosidase 41 (535 aa).

An N-terminal signal peptide occupies residues 1–27 (MESLMRLVLVLFPFFVVFFVPLDHVSS). An a beta-D-glucoside-binding site is contributed by Gln-49. N-linked (GlcNAc...) asparagine glycosylation occurs at Asn-118. Residues His-151 and 196–197 (NE) contribute to the a beta-D-glucoside site. Residue Glu-197 is the Proton donor of the active site. Cys-216 and Cys-224 are joined by a disulfide. A beta-D-glucoside-binding residues include Tyr-340 and Glu-413. Glu-413 serves as the catalytic Nucleophile. An N-linked (GlcNAc...) asparagine glycan is attached at Asn-445. Residues Trp-463, 470 to 471 (EW), and Phe-479 contribute to the a beta-D-glucoside site. Asn-489 carries an N-linked (GlcNAc...) asparagine glycan.

The protein belongs to the glycosyl hydrolase 1 family.

It catalyses the reaction Hydrolysis of terminal, non-reducing beta-D-glucosyl residues with release of beta-D-glucose.. The protein is Putative beta-glucosidase 41 of Arabidopsis thaliana (Mouse-ear cress).